Consider the following 359-residue polypeptide: UDP-3-O-acylglucosamine N-acyltransferase (359 aa).

Catalysis depends on histidine 247, which acts as the Proton acceptor.

The protein belongs to the transferase hexapeptide repeat family. LpxD subfamily. Homotrimer.

The catalysed reaction is a UDP-3-O-[(3R)-3-hydroxyacyl]-alpha-D-glucosamine + a (3R)-hydroxyacyl-[ACP] = a UDP-2-N,3-O-bis[(3R)-3-hydroxyacyl]-alpha-D-glucosamine + holo-[ACP] + H(+). It participates in bacterial outer membrane biogenesis; LPS lipid A biosynthesis. In terms of biological role, catalyzes the N-acylation of UDP-3-O-acylglucosamine using 3-hydroxyacyl-ACP as the acyl donor. Is involved in the biosynthesis of lipid A, a phosphorylated glycolipid that anchors the lipopolysaccharide to the outer membrane of the cell. The protein is UDP-3-O-acylglucosamine N-acyltransferase of Chlorobium chlorochromatii (strain CaD3).